The sequence spans 389 residues: Lipid-A-disaccharide synthase (389 aa).

The protein belongs to the LpxB family.

It catalyses the reaction a lipid X + a UDP-2-N,3-O-bis[(3R)-3-hydroxyacyl]-alpha-D-glucosamine = a lipid A disaccharide + UDP + H(+). The protein operates within bacterial outer membrane biogenesis; LPS lipid A biosynthesis. Condensation of UDP-2,3-diacylglucosamine and 2,3-diacylglucosamine-1-phosphate to form lipid A disaccharide, a precursor of lipid A, a phosphorylated glycolipid that anchors the lipopolysaccharide to the outer membrane of the cell. The chain is Lipid-A-disaccharide synthase from Burkholderia ambifaria (strain MC40-6).